Consider the following 260-residue polypeptide: 5-oxoprolinase subunit A (260 aa).

It belongs to the LamB/PxpA family. As to quaternary structure, forms a complex composed of PxpA, PxpB and PxpC.

It carries out the reaction 5-oxo-L-proline + ATP + 2 H2O = L-glutamate + ADP + phosphate + H(+). In terms of biological role, catalyzes the cleavage of 5-oxoproline to form L-glutamate coupled to the hydrolysis of ATP to ADP and inorganic phosphate. In Methylococcus capsulatus (strain ATCC 33009 / NCIMB 11132 / Bath), this protein is 5-oxoprolinase subunit A.